We begin with the raw amino-acid sequence, 367 residues long: Glutamate 5-kinase (367 aa).

K10 contributes to the ATP binding site. Substrate is bound by residues S50, D137, and N149. ATP-binding positions include 169–170 (TD) and 211–217 (TGGMSTK). The PUA domain maps to 275–353 (AGEITVDEGA…QQIDAILGYE (79 aa)).

Belongs to the glutamate 5-kinase family.

The protein resides in the cytoplasm. The enzyme catalyses L-glutamate + ATP = L-glutamyl 5-phosphate + ADP. It participates in amino-acid biosynthesis; L-proline biosynthesis; L-glutamate 5-semialdehyde from L-glutamate: step 1/2. Functionally, catalyzes the transfer of a phosphate group to glutamate to form L-glutamate 5-phosphate. In Salmonella arizonae (strain ATCC BAA-731 / CDC346-86 / RSK2980), this protein is Glutamate 5-kinase.